The sequence spans 427 residues: MKVEVKKIDDANVAVQGNIENKVVEANVDKLAREAGKQMKVDGFRKGKVPPHVVKKLHGDKLQQDAEGDALRSLIDLGVKEAGINTADILGEPIFKKYDKKDEGIEVEVEISLRPTIEAEGYEKAVPAFEKPEATEKEVEEKLEEIAAQQAPFEKIKRKRMVRDGDTVVIDFEGFVDGVAFEGGKAEKFSLKIGSGQFIPGFEEQIIGMKYDEEKTITVAFPEEYQSKELAGKEAEFKVKLHEIQEQVPAELNDALAQKLLQDEKATLDTLKEKLKEQIVNEKTSKIYNEELKPKIIEALVAHFDFALPNNIVEQEIDAKINAKAREMSEEELNDFKENPEKVEALREELREEAENSVKATFIVDALAKKEDVNVDDQEVSQAIYYEAMMSGQDPQQVIEYYQKNNLLPAVKMGMIEDKLFGKLLGL.

The 86-residue stretch at 165-250 folds into the PPIase FKBP-type domain; the sequence is GDTVVIDFEG…LHEIQEQVPA (86 aa).

Belongs to the FKBP-type PPIase family. Tig subfamily.

The protein resides in the cytoplasm. It catalyses the reaction [protein]-peptidylproline (omega=180) = [protein]-peptidylproline (omega=0). Its function is as follows. Involved in protein export. Acts as a chaperone by maintaining the newly synthesized protein in an open conformation. Functions as a peptidyl-prolyl cis-trans isomerase. In Sulfurovum sp. (strain NBC37-1), this protein is Trigger factor.